We begin with the raw amino-acid sequence, 221 residues long: Esterase C25G4.2 (221 aa).

Catalysis depends on charge relay system residues S106, D166, and H194.

It belongs to the LovG family.

The sequence is that of Esterase C25G4.2 from Caenorhabditis elegans.